The sequence spans 86 residues: Exodeoxyribonuclease 7 small subunit (86 aa).

Belongs to the XseB family. Heterooligomer composed of large and small subunits.

The protein resides in the cytoplasm. It catalyses the reaction Exonucleolytic cleavage in either 5'- to 3'- or 3'- to 5'-direction to yield nucleoside 5'-phosphates.. Its function is as follows. Bidirectionally degrades single-stranded DNA into large acid-insoluble oligonucleotides, which are then degraded further into small acid-soluble oligonucleotides. The chain is Exodeoxyribonuclease 7 small subunit from Agrobacterium fabrum (strain C58 / ATCC 33970) (Agrobacterium tumefaciens (strain C58)).